Consider the following 717-residue polypeptide: MKTSGASNTDELNKSSHSKVSKKSTKSRSKSAKLELTGKNSLSASASSSIASAVSGGVAVGSLPATPTHLNMVTTPTTPTSSLGNYNLFDASFAVAGSGGHGLAGGIAGAEASGNSSRMGHQKSYAGFDPRSIKIFWEQHDQTDVELSQDVCARLAEDASYKVWELINNVKIYSRHSGGVVTYDLVNEVLKDADVPPMLGAMDSDWDRIDYDGSFYFHSDKIFELSAEFQKEVNLCTPDDADFQSICPVEDKHMDQLRQCVQSLVTAALFADSKSQTAAVCHAFQTPLMGSIYRVIVSKMVQLLAFKQQDHLSQRCWRLLRACNYNATANHNACRPEYFNLAEVLVSQLMAPYETIKAPHVDPDPGQTTSIKMEFEEELKVEPDQCHNPETQENPEVMGVEKQEQEPQMFPGESTMEHTIYKLQSEEEELNPQPEAEHLSSYFACPVGNGLVDELCETIGQLASQSGYLHAECLFLIKRRLARFFEGRHVSSERDFRYISRAVRGLIALGEYAFREFIPYIYKLRVEEIPDSLWPDLAPAAIFLGGHDDVYLYEWLEYGCGAALQPFLVHYARAYEKMVTRRYVKAKQPAYRIESVPGVRRLEWSTLAAAMCHGDDPSKALKPKPTLCEAFPDLQSPNLQLNCAGNIRFKFAGCRPVLLKPKVATVPHSEDSPSSAANGGGGGGASSDILIAKRKLFKPLTNVRKWSPISGYHYLRI.

The tract at residues 123-204 (KSYAGFDPRS…VPPMLGAMDS (82 aa)) is sufficient for interaction with Taf9.

It belongs to the TAF6 family. In terms of assembly, component of the Spt-Ada-Gcn5 acetyltransferase (SAGA) complex consisting of wda/Taf5L, Saf6, Taf9, Taf10b, Taf12, Ada1, Spt3, Spt7, Spt20, Sf3b3, Sf3b5, Nipped-A/Tra1, a histone acetyltransferase (HAT) module made up of Gcn5, Ada2b (Isoform B), Ada3 and Sgf29, and a deubiquitinase (DUB) module made up of not/nonstop, Sgf11 and e(y)2 tethered to SAGA by Atxn7; not essential for SAGA complex assembly, histone-modifying activity or chromosomal recruitment. Interacts (via N-terminal histone-fold domain) with Taf9 (via N-terminal histone-fold domain); the interaction is probably direct. Probably forms a histone-like heterooctamer structure with Taf9, Taf12 and Taf10b.

Its subcellular location is the nucleus. The protein localises to the chromosome. Functionally, component of the transcription regulatory complex SAGA, a multiprotein complex that activates transcription by remodeling chromatin and mediating histone acetylation and deubiquitination. The SAGA complex predominantly acetylates histone H3. Involved in SAGA complex coactivator function but not essential for SAGA complex assembly, histone-modifying activity or chromosomal recruitment. Required for oogenesis; involved in transcriptional activation. This is SAGA factor-like TAF6 from Drosophila melanogaster (Fruit fly).